We begin with the raw amino-acid sequence, 951 residues long: Protein translocase subunit SecA 1 (951 aa).

Residues glutamine 87, 105–109 (GEGKT), and aspartate 525 each bind ATP. Residues 911-942 (PVVSADRSSRDPGNPASWGKVGRNEDCPCGSG) form a disordered region. The Zn(2+) site is built by cysteine 937, cysteine 939, cysteine 948, and histidine 949.

Belongs to the SecA family. In terms of assembly, monomer and homodimer. Part of the essential Sec protein translocation apparatus which comprises SecA, SecYEG and auxiliary proteins SecDF-YajC and YidC. Requires Zn(2+) as cofactor.

It localises to the cell inner membrane. The protein localises to the cytoplasm. The catalysed reaction is ATP + H2O + cellular proteinSide 1 = ADP + phosphate + cellular proteinSide 2.. In terms of biological role, part of the Sec protein translocase complex. Interacts with the SecYEG preprotein conducting channel. Has a central role in coupling the hydrolysis of ATP to the transfer of proteins into and across the cell membrane, serving both as a receptor for the preprotein-SecB complex and as an ATP-driven molecular motor driving the stepwise translocation of polypeptide chains across the membrane. The sequence is that of Protein translocase subunit SecA 1 from Nitrobacter hamburgensis (strain DSM 10229 / NCIMB 13809 / X14).